We begin with the raw amino-acid sequence, 452 residues long: tRNA modification GTPase MnmE (452 aa).

(6S)-5-formyl-5,6,7,8-tetrahydrofolate-binding residues include Arg21, Glu78, and Lys118. The region spanning 214–375 (GMKVVIAGRP…LREHLKKSMG (162 aa)) is the TrmE-type G domain. Residue Asn224 participates in K(+) binding. GTP contacts are provided by residues 224 to 229 (NAGKSS), 243 to 249 (TNIAGTT), and 268 to 271 (DTAG). Ser228 contacts Mg(2+). 3 residues coordinate K(+): Thr243, Ile245, and Thr248. Thr249 is a Mg(2+) binding site. Lys452 provides a ligand contact to (6S)-5-formyl-5,6,7,8-tetrahydrofolate.

It belongs to the TRAFAC class TrmE-Era-EngA-EngB-Septin-like GTPase superfamily. TrmE GTPase family. Homodimer. Heterotetramer of two MnmE and two MnmG subunits. Requires K(+) as cofactor.

The protein localises to the cytoplasm. Its function is as follows. Exhibits a very high intrinsic GTPase hydrolysis rate. Involved in the addition of a carboxymethylaminomethyl (cmnm) group at the wobble position (U34) of certain tRNAs, forming tRNA-cmnm(5)s(2)U34. The chain is tRNA modification GTPase MnmE from Actinobacillus pleuropneumoniae serotype 5b (strain L20).